Reading from the N-terminus, the 504-residue chain is O-fucosyltransferase 39 (504 aa).

Residues 11 to 27 (WILSMFFFVVLFCNNVS) traverse the membrane as a helical; Signal-anchor for type II membrane protein segment. N-linked (GlcNAc...) asparagine glycosylation is present at asparagine 115. Substrate is bound at residue 288–290 (HLR). N-linked (GlcNAc...) asparagine glycosylation is found at asparagine 359 and asparagine 460.

Belongs to the glycosyltransferase GT106 family.

It is found in the membrane. The protein operates within glycan metabolism. This is O-fucosyltransferase 39 from Arabidopsis thaliana (Mouse-ear cress).